Consider the following 407-residue polypeptide: Zinc finger protein 552 (407 aa).

A KRAB domain is found at 14–90 (VTFEDVAVKF…PMAGVSPKKA (77 aa)). The C2H2-type 1 zinc finger occupies 91 to 113 (HPCEMCGPILGDILHVADHQGTH). A C2H2-type 2; degenerate zinc finger spans residues 119-141 (HRCEAWGNKLYDSGNFHQHQNEH). Glycyl lysine isopeptide (Lys-Gly) (interchain with G-Cter in SUMO2) cross-links involve residues Lys-176 and Lys-198. A C2H2-type 3; degenerate zinc finger spans residues 212–234 (YSCGGCMKHFSTKDILSQHERLL). The C2H2-type 4; degenerate zinc-finger motif lies at 244-262 (ECGKSSSKYDSFSNHQGVH). Residues Lys-251 and Lys-266 each participate in a glycyl lysine isopeptide (Lys-Gly) (interchain with G-Cter in SUMO2) cross-link. C2H2-type zinc fingers lie at residues 268-290 (YTCGICGKLFNSKSHLLVHQRIH), 296-318 (YECEVCQKFFRHKYHLIAHQRVH), 324-346 (YECSDCGKSFTHSSTFRVHKRVH), 352-374 (YECSECGKSFAESSSLTKHRRVH), and 380-402 (YGCSECEKKFRQISSLRHHQRVH). Residue Lys-308 forms a Glycyl lysine isopeptide (Lys-Gly) (interchain with G-Cter in SUMO2) linkage.

It belongs to the krueppel C2H2-type zinc-finger protein family.

Its subcellular location is the nucleus. Functionally, may be involved in transcriptional regulation. This Homo sapiens (Human) protein is Zinc finger protein 552 (ZNF552).